The chain runs to 251 residues: CDP-diacylglycerol pyrophosphatase (251 aa).

A helical transmembrane segment spans residues 4–24; sequence AGLLFLVMIVIAVVAAGIGYW.

The protein belongs to the Cdh family.

It localises to the cell inner membrane. It carries out the reaction a CDP-1,2-diacyl-sn-glycerol + H2O = a 1,2-diacyl-sn-glycero-3-phosphate + CMP + 2 H(+). The protein operates within phospholipid metabolism; CDP-diacylglycerol degradation; phosphatidate from CDP-diacylglycerol: step 1/1. This is CDP-diacylglycerol pyrophosphatase from Escherichia coli (strain K12 / MC4100 / BW2952).